A 288-amino-acid polypeptide reads, in one-letter code: 33 kDa chaperonin (288 aa).

2 disulfide bridges follow: Cys235–Cys237 and Cys268–Cys271.

The protein belongs to the HSP33 family. In terms of processing, under oxidizing conditions two disulfide bonds are formed involving the reactive cysteines. Under reducing conditions zinc is bound to the reactive cysteines and the protein is inactive.

Its subcellular location is the cytoplasm. Functionally, redox regulated molecular chaperone. Protects both thermally unfolding and oxidatively damaged proteins from irreversible aggregation. Plays an important role in the bacterial defense system toward oxidative stress. The sequence is that of 33 kDa chaperonin from Streptococcus thermophilus (strain ATCC BAA-491 / LMD-9).